The primary structure comprises 147 residues: Hemoglobin subunit beta (147 aa).

Val-2 carries the N-acetylvaline modification. The Globin domain maps to His-3–His-147. Thr-13 carries the post-translational modification Phosphothreonine. Position 45 is a phosphoserine (Ser-45). Lys-60 bears the N6-acetyllysine mark. Residue His-64 participates in heme b binding. Position 83 is an N6-acetyllysine (Lys-83). A heme b-binding site is contributed by His-93. S-nitrosocysteine is present on Cys-94. Lys-145 is subject to N6-acetyllysine.

It belongs to the globin family. In terms of assembly, heterotetramer of two alpha chains and two beta chains. Red blood cells.

Involved in oxygen transport from the lung to the various peripheral tissues. The sequence is that of Hemoglobin subunit beta (HBB) from Scalopus aquaticus (Eastern mole).